Reading from the N-terminus, the 1258-residue chain is Regulator of G-protein signaling 22 (1258 aa).

Positions 581–604 (QQLGRSEPLNAVSSKDGGLEKGSK) are disordered. 2 consecutive RGS domains span residues 845–973 (TFTD…ASRQ) and 1014–1138 (AFRK…TDEK). Residues 1145–1172 (RRQEHKQKRKASDTEEDKAGKSGVKQYA) form a disordered region. A compositionally biased stretch (basic and acidic residues) spans 1154-1164 (KASDTEEDKAG).

In terms of assembly, interacts with GNA11, GNA12 and GNA13. As to expression, expressed testis, including in Leydig cells and spermatogenic cells from the spermatogonia to spermatid stages (at protein level).

It localises to the cytoplasm. It is found in the nucleus. Inhibits signal transduction by increasing the GTPase activity of G protein alpha subunits thereby driving them into their inactive GDP-bound form. The protein is Regulator of G-protein signaling 22 (Rgs22) of Mus musculus (Mouse).